A 442-amino-acid polypeptide reads, in one-letter code: Zinc finger protein sfp1 (442 aa).

The span at 193–208 (AASSDMSSDEASSQAE) shows a compositional bias: low complexity. Disordered stretches follow at residues 193–219 (AASS…MPES) and 304–333 (SPFV…HDSP). 2 C2H2-type zinc fingers span residues 350 to 375 (YKCP…LHGH) and 399 to 422 (YRCE…THSH).

It is found in the cytoplasm. The protein resides in the nucleus. This Schizosaccharomyces pombe (strain 972 / ATCC 24843) (Fission yeast) protein is Zinc finger protein sfp1 (sfp1).